A 185-amino-acid chain; its full sequence is MSNTTTTATTTNINENKVREIYKAPMKIGEIEYIPYQGESQIQDLMSLIEKELPEPYSIFTYRFFLNQWPELCFLAYCNGQLIGVIISKKQTHKLLERGYIGMIVVDKTFRRQKIGSTLIKLTIEKMIEMKCDEVVLETIFTNIQAISLYENLGFTRIKRLFRYYTMGADAVRLLLPLNDKFLIK.

Residues 31–179 enclose the N-acetyltransferase domain; that stretch reads IEYIPYQGES…DAVRLLLPLN (149 aa).

It belongs to the acetyltransferase family. MAK3 subfamily.

Its function is as follows. Probable catalytic component of a complex displaying alpha (N-terminal) acetyltransferase activity. This Dictyostelium discoideum (Social amoeba) protein is N-alpha-acetyltransferase 30.